The sequence spans 103 residues: Histone H4 (103 aa).

The segment covering 1 to 14 (MSGRGKGGKGLGKG) has biased composition (gly residues). The segment at 1-20 (MSGRGKGGKGLGKGGAKRHR) is disordered. K6 is subject to N6-acetyl-N6-methyllysine; alternate. 3 positions are modified to N6-methyllysine; alternate: K6, K9, and K13. K13 carries the N6-acetyl-N6-methyllysine; alternate modification. A DNA-binding region spans residues 17–21 (KRHRK). Position 92 is an N6-glutaryllysine (K92).

The protein belongs to the histone H4 family. The nucleosome is a histone octamer containing two molecules each of H2A, H2B, H3 and H4 assembled in one H3-H4 heterotetramer and two H2A-H2B heterodimers. The octamer wraps approximately 147 bp of DNA. Post-translationally, glutarylation at Lys-92 (H4K91glu) destabilizes nucleosomes by promoting dissociation of the H2A-H2B dimers from nucleosomes.

It is found in the nucleus. Its subcellular location is the chromosome. In terms of biological role, core component of nucleosome. Nucleosomes wrap and compact DNA into chromatin, limiting DNA accessibility to the cellular machineries which require DNA as a template. Histones thereby play a central role in transcription regulation, DNA repair, DNA replication and chromosomal stability. DNA accessibility is regulated via a complex set of post-translational modifications of histones, also called histone code, and nucleosome remodeling. The sequence is that of Histone H4 (H4.1) from Phanerodontia chrysosporium (White-rot fungus).